Consider the following 404-residue polypeptide: Nuclear receptor subfamily 2 group F member 6 (404 aa).

A compositionally biased stretch (gly residues) spans 1–15 (MAMVTGGWGGPGGDT). Residues 1–49 (MAMVTGGWGGPGGDTNGVDKAGGYPRAAEDDSASPPGAASDAEPGDEER) form a disordered region. Residues 33-42 (ASPPGAASDA) are compositionally biased toward low complexity. Residues Ser34 and Ser40 each carry the phosphoserine modification. The segment at residues 53–128 (QVDCVVCGDK…VGMRKEAVQR (76 aa)) is a DNA-binding region (nuclear receptor). The NR C4-type zinc-finger motif lies at 56-76 (CVVCGDKSSGKHYGVFTCEGC). Ser83 bears the Phosphoserine mark. The segment at 92–116 (CRSNRDCQIDQHHRNQCQYCRLKKC) adopts an NR C4-type zinc-finger fold. Positions 165–393 (PVSELIAQLL…TLIRDMLLSG (229 aa)) constitute an NR LBD domain. The tract at residues 327 to 404 (LQEKAQVALT…TFNWPYGSGQ (78 aa)) is important for dimerization.

The protein belongs to the nuclear hormone receptor family. NR2 subfamily. Binds DNA as dimer; homodimer and heterodimer with NR2F2 and probably NR2F1. Interacts with THRB. In terms of tissue distribution, expressed in heart, placenta, liver, skeletal muscle, kidney and pancreas.

Its subcellular location is the nucleus. Functionally, transcription factor predominantly involved in transcriptional repression. Binds to promoter/enhancer response elements that contain the imperfect 5'-AGGTCA-3' direct or inverted repeats with various spacings which are also recognized by other nuclear hormone receptors. Involved in modulation of hormonal responses. Represses transcriptional activity of the lutropin-choriogonadotropic hormone receptor/LHCGR gene, the renin/REN gene and the oxytocin-neurophysin/OXT gene. Represses the triiodothyronine-dependent and -independent transcriptional activity of the thyroid hormone receptor gene in a cell type-specific manner. The corepressing function towards thyroid hormone receptor beta/THRB involves at least in part the inhibition of THRB binding to triiodothyronine response elements (TREs) by NR2F6. Inhibits NFATC transcription factor DNA binding and subsequently its transcriptional activity. Acts as transcriptional repressor of IL-17 expression in Th-17 differentiated CD4(+) T cells and may be involved in induction and/or maintenance of peripheral immunological tolerance and autoimmunity. Involved in development of forebrain circadian clock; is required early in the development of the locus coeruleus (LC). This Homo sapiens (Human) protein is Nuclear receptor subfamily 2 group F member 6 (NR2F6).